A 170-amino-acid chain; its full sequence is Large ribosomal subunit protein uL10 (170 aa).

This sequence belongs to the universal ribosomal protein uL10 family. In terms of assembly, part of the ribosomal stalk of the 50S ribosomal subunit. The N-terminus interacts with L11 and the large rRNA to form the base of the stalk. The C-terminus forms an elongated spine to which L12 dimers bind in a sequential fashion forming a multimeric L10(L12)X complex.

Its function is as follows. Forms part of the ribosomal stalk, playing a central role in the interaction of the ribosome with GTP-bound translation factors. This Chlamydia caviae (strain ATCC VR-813 / DSM 19441 / 03DC25 / GPIC) (Chlamydophila caviae) protein is Large ribosomal subunit protein uL10.